We begin with the raw amino-acid sequence, 142 residues long: Probable transport accessory protein MmpS1 (142 aa).

Transmembrane regions (helical) follow at residues 8–28 (FWIPMVIVIVVAVAAVTVSRL) and 81–101 (VVNAAVPWSFTIVTTLTAVVA).

Belongs to the MmpS family.

Its subcellular location is the cell membrane. The polypeptide is Probable transport accessory protein MmpS1 (mmpS1) (Mycobacterium bovis (strain ATCC BAA-935 / AF2122/97)).